The chain runs to 163 residues: Neurotrophin-3 (163 aa).

The N-terminal stretch at 1–3 (IQS) is a signal peptide. The propeptide occupies 4–119 (TSMDQGILTE…VLNRTSRRKR (116 aa)). The segment at 35 to 61 (KQTARTKDGTQTTVKKSEAEADATASQ) is disordered. Asn-112 is a glycosylation site (N-linked (GlcNAc...) asparagine).

This sequence belongs to the NGF-beta family.

The protein resides in the secreted. In terms of biological role, seems to promote the survival of visceral and proprioceptive sensory neurons. The chain is Neurotrophin-3 (NTF3) from Corallus caninus (Emerald tree boa).